Consider the following 232-residue polypeptide: Ubiquinone biosynthesis O-methyltransferase (232 aa).

The S-adenosyl-L-methionine site is built by R36, G55, D76, and L120.

Belongs to the methyltransferase superfamily. UbiG/COQ3 family.

It catalyses the reaction a 3-demethylubiquinol + S-adenosyl-L-methionine = a ubiquinol + S-adenosyl-L-homocysteine + H(+). It carries out the reaction a 3-(all-trans-polyprenyl)benzene-1,2-diol + S-adenosyl-L-methionine = a 2-methoxy-6-(all-trans-polyprenyl)phenol + S-adenosyl-L-homocysteine + H(+). It participates in cofactor biosynthesis; ubiquinone biosynthesis. In terms of biological role, O-methyltransferase that catalyzes the 2 O-methylation steps in the ubiquinone biosynthetic pathway. This chain is Ubiquinone biosynthesis O-methyltransferase, found in Pseudomonas fluorescens (strain Pf0-1).